We begin with the raw amino-acid sequence, 269 residues long: Pertussis toxin subunit 1 homolog (269 aa).

The N-terminal stretch at 1-34 (MRCTRAIRQTARTGWLTWLAILAVTAPMTSPAWA) is a signal peptide.

The protein belongs to the bacterial exotoxin subunit A family.

The chain is Pertussis toxin subunit 1 homolog (ptxA) from Bordetella parapertussis (strain 12822 / ATCC BAA-587 / NCTC 13253).